The chain runs to 341 residues: Undecaprenyl-phosphate 4-deoxy-4-formamido-L-arabinose transferase (341 aa).

2 consecutive transmembrane segments (helical) span residues 235–255 (LSIV…ALIV) and 269–289 (LFVL…GMGL).

This sequence belongs to the glycosyltransferase 2 family.

The protein resides in the cell inner membrane. It carries out the reaction UDP-4-deoxy-4-formamido-beta-L-arabinose + di-trans,octa-cis-undecaprenyl phosphate = 4-deoxy-4-formamido-alpha-L-arabinopyranosyl di-trans,octa-cis-undecaprenyl phosphate + UDP. The protein operates within glycolipid biosynthesis; 4-amino-4-deoxy-alpha-L-arabinose undecaprenyl phosphate biosynthesis; 4-amino-4-deoxy-alpha-L-arabinose undecaprenyl phosphate from UDP-4-deoxy-4-formamido-beta-L-arabinose and undecaprenyl phosphate: step 1/2. Its pathway is bacterial outer membrane biogenesis; lipopolysaccharide biosynthesis. Its function is as follows. Catalyzes the transfer of 4-deoxy-4-formamido-L-arabinose from UDP to undecaprenyl phosphate. The modified arabinose is attached to lipid A and is required for resistance to polymyxin and cationic antimicrobial peptides. The polypeptide is Undecaprenyl-phosphate 4-deoxy-4-formamido-L-arabinose transferase (Pseudomonas fluorescens (strain SBW25)).